Here is a 706-residue protein sequence, read N- to C-terminus: Putative pentatricopeptide repeat-containing protein At3g47840 (706 aa).

PPR repeat units lie at residues 39–69 (VKFD…MPHG), 70–104 (DIVS…DHAV), 107–141 (DTSV…SLLS), 142–172 (SVYV…MPFR), 173–203 (NAVT…MSRS), 208–242 (DTYT…GFVT), 243–273 (TLCV…MSER), 274–308 (DVVS…QVPP), 309–343 (NEQT…GLND), 344–374 (SLSV…MRCR), 375–409 (DIIS…GTKP), 410–444 (TDFA…GLEQ), 445–475 (NSTV…TDRD), 476–510 (DIVS…GFRP), 511–541 (DSVT…MQET), and 547–577 (AKEH…MSWK). The segment at 582–657 (VWTTLLIACK…EPGWSSIKIK (76 aa)) is type E motif. Residues 658–688 (DCVSAFVSGDRFHPQSEDIYNILELAVSGAE) are type E(+) motif.

This sequence belongs to the PPR family. PCMP-E subfamily.

In Arabidopsis thaliana (Mouse-ear cress), this protein is Putative pentatricopeptide repeat-containing protein At3g47840 (PCMP-E43).